A 380-amino-acid chain; its full sequence is Cytochrome b (380 aa).

A run of 4 helical transmembrane segments spans residues 34-54 (FGSL…LLAA), 78-99 (WLIR…YLHI), 114-134 (WNTG…GYVL), and 179-199 (FFTL…IHLT). 2 residues coordinate heme b: His84 and His98. 2 residues coordinate heme b: His183 and His197. Position 202 (His202) interacts with a ubiquinone. Transmembrane regions (helical) follow at residues 227–247 (TKDI…ALFS), 289–309 (LGGV…PLLH), 321–341 (LSQL…WIGS), and 348–368 (FIII…ILFP).

This sequence belongs to the cytochrome b family. As to quaternary structure, the cytochrome bc1 complex contains 11 subunits: 3 respiratory subunits (MT-CYB, CYC1 and UQCRFS1), 2 core proteins (UQCRC1 and UQCRC2) and 6 low-molecular weight proteins (UQCRH/QCR6, UQCRB/QCR7, UQCRQ/QCR8, UQCR10/QCR9, UQCR11/QCR10 and a cleavage product of UQCRFS1). This cytochrome bc1 complex then forms a dimer. The cofactor is heme b.

It localises to the mitochondrion inner membrane. Component of the ubiquinol-cytochrome c reductase complex (complex III or cytochrome b-c1 complex) that is part of the mitochondrial respiratory chain. The b-c1 complex mediates electron transfer from ubiquinol to cytochrome c. Contributes to the generation of a proton gradient across the mitochondrial membrane that is then used for ATP synthesis. The sequence is that of Cytochrome b (MT-CYB) from Eudyptes chrysolophus (Macaroni penguin).